A 245-amino-acid chain; its full sequence is Isopentenyl phosphate kinase (245 aa).

5 to 9 is an ATP binding site; the sequence is KIGGS. Residue glycine 45 coordinates substrate. Glycine 46 serves as a coordination point for ATP. Residues histidine 50 and glycine 143 each contribute to the substrate site. Residues aspartate 164, 169–174, glycine 201, and lysine 205 contribute to the ATP site; that span reads YSKDPK.

This sequence belongs to the isopentenyl phosphate kinase family. As to quaternary structure, homodimer.

It carries out the reaction isopentenyl phosphate + ATP = isopentenyl diphosphate + ADP. Functionally, catalyzes the formation of isopentenyl diphosphate (IPP), the building block of all isoprenoids. Has lower activity with isopentenyl thiolophosphate (ISP). Has low activity with dimethylallyl phosphate (DMAP), 1-butyl phosphate (BP) and 3-buten-1-yl phosphate (BEP). Has no significant activity with geranyl phosphate (in vitro). In Thermoplasma acidophilum (strain ATCC 25905 / DSM 1728 / JCM 9062 / NBRC 15155 / AMRC-C165), this protein is Isopentenyl phosphate kinase.